The primary structure comprises 156 residues: Small ribosomal subunit protein uS7 (156 aa).

It belongs to the universal ribosomal protein uS7 family. In terms of assembly, part of the 30S ribosomal subunit. Contacts proteins S9 and S11.

Its function is as follows. One of the primary rRNA binding proteins, it binds directly to 16S rRNA where it nucleates assembly of the head domain of the 30S subunit. Is located at the subunit interface close to the decoding center, probably blocks exit of the E-site tRNA. This chain is Small ribosomal subunit protein uS7, found in Streptococcus pneumoniae (strain Taiwan19F-14).